The chain runs to 300 residues: Actin-related protein 2/3 complex subunit 2 (300 aa).

N6-acetyllysine is present on residues K275 and K295.

It belongs to the ARPC2 family. Component of the Arp2/3 complex composed of ACTR2/ARP2, ACTR3/ARP3, ARPC1B/p41-ARC, ARPC2/p34-ARC, ARPC3/p21-ARC, ARPC4/p20-ARC and ARPC5/p16-ARC. Interacts with SHANK3; the interaction probably mediates the association of SHANK3 with the Arp2/3 complex.

It localises to the cytoplasm. It is found in the cytoskeleton. Its subcellular location is the cell projection. The protein localises to the synapse. The protein resides in the synaptosome. It localises to the nucleus. In terms of biological role, actin-binding component of the Arp2/3 complex, a multiprotein complex that mediates actin polymerization upon stimulation by nucleation-promoting factor (NPF). The Arp2/3 complex mediates the formation of branched actin networks in the cytoplasm, providing the force for cell motility. Seems to contact the mother actin filament. In addition to its role in the cytoplasmic cytoskeleton, the Arp2/3 complex also promotes actin polymerization in the nucleus, thereby regulating gene transcription and repair of damaged DNA. The Arp2/3 complex promotes homologous recombination (HR) repair in response to DNA damage by promoting nuclear actin polymerization, leading to drive motility of double-strand breaks (DSBs). This Rattus norvegicus (Rat) protein is Actin-related protein 2/3 complex subunit 2.